Here is a 372-residue protein sequence, read N- to C-terminus: MTSIEPTHTGKKVIVGMSGGVDSSVSAYLLMQQGYQVEGLFMKNWEEDDNDEYCAAAEDLKDAQAVCDKLGIKLHTVNFAAEYWDNVFEYFLAEYKAGRTPNPDIMCNKEIKFKAFLDFADDILDADYIAMGHYVRRRDNADGTTQMLRGVDNNKDQSYFLYTLSHEQVARSLFPVGELEKHEVREIAKKMGLITHDKKDSTGICFIGERKFTEFLGNYLPAQPGNIETAEGEIIGKHQGLMYQTLGQRKGLGIGGMKNSNDDPWYVVDKDLKRNVLVVGQGGHHPRLMSNGMLVNQLHWVDRKGPAEGSQIVVKTRYRQQDIPCTLTYLDDNTLKVVFDEPVAAVTPGQSAVFYDGEVCLGGGIIDQLIRG.

Residues 16 to 23 (GMSGGVDS) and Met42 each bind ATP. Residues 102–104 (NPD) are interaction with target base in tRNA. Residue Cys107 is the Nucleophile of the active site. The cysteines at positions 107 and 205 are disulfide-linked. ATP is bound at residue Gly132. The segment at 155-157 (KDQ) is interaction with tRNA. Cys205 (cysteine persulfide intermediate) is an active-site residue. Positions 317–318 (RY) are interaction with tRNA.

Belongs to the MnmA/TRMU family.

The protein resides in the cytoplasm. It catalyses the reaction S-sulfanyl-L-cysteinyl-[protein] + uridine(34) in tRNA + AH2 + ATP = 2-thiouridine(34) in tRNA + L-cysteinyl-[protein] + A + AMP + diphosphate + H(+). Functionally, catalyzes the 2-thiolation of uridine at the wobble position (U34) of tRNA, leading to the formation of s(2)U34. This is tRNA-specific 2-thiouridylase MnmA from Shewanella sp. (strain ANA-3).